Consider the following 69-residue polypeptide: uncharacterized protein (69 aa).

This is an uncharacterized protein from Vaccinia virus (strain Western Reserve) (VACV).